The sequence spans 276 residues: Halorhodopsin (276 aa).

A propeptide spanning residues 1–21 (MTAVSTTATTVLQATQSDVLQ) is cleaved from the precursor. At 22-25 (EIQS) the chain is on the extracellular side. Residues 26-51 (NFLLNSSIWVNIALAGVVILLFVAMG) form a helical membrane-spanning segment. Residues 52 to 57 (RDLESP) lie on the Cytoplasmic side of the membrane. The helical transmembrane segment at 58 to 81 (RAKLIWVATMLVPLVSISSYAGLA) threads the bilayer. Residues 82–105 (SGLTVGFLQMPPGHALAGQEVLSP) are Extracellular-facing. Residues 106–127 (WGRYLTWTFSTPMILLALGLLA) form a helical membrane-spanning segment. The Cytoplasmic portion of the chain corresponds to 128–130 (DTD). The chain crosses the membrane as a helical span at residues 131-154 (IASLFTAITMDIGMCVTGLAAALI). Over 155–157 (TSS) the chain is Extracellular. A helical membrane pass occupies residues 158-180 (HLLRWVFYGISCAFFVAVLYVLL). Topologically, residues 181 to 192 (VQWPADAEAAGT) are cytoplasmic. The helical transmembrane segment at 193-216 (SEIFGTLKILTVVLWLGYPILWAL) threads the bilayer. At 217–225 (GSEGVALLS) the chain is on the extracellular side. A helical transmembrane segment spans residues 226 to 254 (VGVTSWGYSGLDILAKYVFAFLLLRWVAA). Lys241 is modified (N6-(retinylidene)lysine). The Cytoplasmic segment spans residues 255 to 276 (NEGTVSGSGMGIGSGGAAPADD).

The protein belongs to the archaeal/bacterial/fungal opsin family.

The protein resides in the cell membrane. Light-driven anion pump. The polypeptide is Halorhodopsin (Halobacterium halobium (strain shark)).